The following is a 212-amino-acid chain: HTH-type transcriptional regulatory protein RaaS (212 aa).

Residues 6-65 (LTAHARIREAAIEQFGRHGFGVGLRAIAEAAGVSAALVIHHFGSKEGLRKACDDFVAEEI) enclose the HTH tetR-type domain. Residues 28-47 (GLRAIAEAAGVSAALVIHHF) constitute a DNA-binding region (H-T-H motif).

In terms of assembly, homodimer. Interacts with long chain acyl-CoA derivatives. Interacts with several drugs such rhodamine 6G, ethidium and safranin O.

Interaction with long chain acyl-CoA derivatives (oleoyl-CoA and, to lesser extent, stearoyl-CoA) prevents binding to DNA, leading to the expression of the target genes. Long chain acyl-CoA derivatives may serve as biological indicators of the bacterial metabolic state. In terms of biological role, regulates the expression of the Rv1217c-Rv1218c multidrug efflux system and its own expression. Acts by binding to promoter regions of Rv1219c and upstream of the Rv1218c gene. Important for survival in prolonged stationary phase and during macrophage infection. May be used to eliminate non-growing mycobacteria. The polypeptide is HTH-type transcriptional regulatory protein RaaS (Mycobacterium tuberculosis (strain ATCC 25618 / H37Rv)).